Consider the following 205-residue polypeptide: MASDHQTQAGKPQSLNPKIIIFEQENFQGHSHELNGPCPNLKETGVEKAGSVLVQAGPWVGYEQANCKGEQFVFEKGEYPRWDSWTSSRRTDSLSSLRPIKVDSQEHKIILYENPNFTGKKMEIIDDDVPSFHAHGYQEKVSSVRVQSGTWVGYQYPGYRGLQYLLEKGDYKDSSDFGAPHPQVQSVRRIRDMQWHQRGAFHPSN.

Ala-2 is subject to N-acetylalanine. Positions 2–16 are N-terminal arm; sequence ASDHQTQAGKPQSLN. Beta/gamma crystallin 'Greek key' domains lie at 17-56 and 57-101; these read PKIIIFEQENFQGHSHELNGPCPNLKETGVEKAGSVLVQA and GPWV…RPIK. The connecting peptide stretch occupies residues 102-106; that stretch reads VDSQE. 2 Beta/gamma crystallin 'Greek key' domains span residues 107–148 and 149–191; these read HKII…RVQS and GTWV…RRIR. Residues 193-205 are C-terminal arm; that stretch reads MQWHQRGAFHPSN.

It belongs to the beta/gamma-crystallin family. Homo/heterodimer, or complexes of higher-order. The structure of beta-crystallin oligomers seems to be stabilized through interactions between the N-terminal arms.

In terms of biological role, crystallins are the dominant structural components of the vertebrate eye lens. The chain is Beta-crystallin B2 (CRYBB2) from Homo sapiens (Human).